We begin with the raw amino-acid sequence, 366 residues long: Chorismate synthase (366 aa).

NADP(+)-binding residues include R48 and R54. FMN contacts are provided by residues 125–127, 238–239, G278, 293–297, and R319; these read RSS, NA, and KPTSS.

It belongs to the chorismate synthase family. In terms of assembly, homotetramer. The cofactor is FMNH2.

It carries out the reaction 5-O-(1-carboxyvinyl)-3-phosphoshikimate = chorismate + phosphate. It functions in the pathway metabolic intermediate biosynthesis; chorismate biosynthesis; chorismate from D-erythrose 4-phosphate and phosphoenolpyruvate: step 7/7. Catalyzes the anti-1,4-elimination of the C-3 phosphate and the C-6 proR hydrogen from 5-enolpyruvylshikimate-3-phosphate (EPSP) to yield chorismate, which is the branch point compound that serves as the starting substrate for the three terminal pathways of aromatic amino acid biosynthesis. This reaction introduces a second double bond into the aromatic ring system. The polypeptide is Chorismate synthase (Dechloromonas aromatica (strain RCB)).